The primary structure comprises 200 residues: Superoxide dismutase [Mn] 1 (200 aa).

Mn(2+) contacts are provided by His-29, His-76, Asp-158, and His-162.

This sequence belongs to the iron/manganese superoxide dismutase family. The cofactor is Mn(2+).

The catalysed reaction is 2 superoxide + 2 H(+) = H2O2 + O2. Destroys superoxide anion radicals which are normally produced within the cells and which are toxic to biological systems. This is Superoxide dismutase [Mn] 1 (sod1) from Haloferax volcanii (strain ATCC 29605 / DSM 3757 / JCM 8879 / NBRC 14742 / NCIMB 2012 / VKM B-1768 / DS2) (Halobacterium volcanii).